Here is a 317-residue protein sequence, read N- to C-terminus: MTSLSNSLSADTGTTSFSPAAGGEVSDFFALLKPRVMVLVIFTALVGMVVSDATVNPVIAAISLLMIAVGAGASGCLNMWWDADIDALMTRTAKRPIPDGRIRPDEALAFGIVLSVGSVLILGLASNWLAAGLLAFTIVFYAVIYSMWLKRATAQNIVIGGAAGALPPVVGQAAVTGHVGIESLVLFAIIFIWTPPHFWALALVKSGEYARAGIPMMPNVAGPDSTRRQIIWYSLVLAPLALLPVWLGFGGWLYAVVGVLGGLGMLAGAVQVYRLREGEPERKAAMGLFAFSILYLFLLFSALLAEQGLGLFRAVAA.

A run of 9 helical transmembrane segments spans residues 36–56 (VMVL…ATVN), 57–77 (PVIA…SGCL), 108–128 (LAFG…ASNW), 129–149 (LAAG…SMWL), 157–177 (IVIG…AVTG), 184–204 (LVLF…LALV), 230–247 (IIWY…PVWL), 251–273 (GWLY…VQVY), and 284–304 (AAMG…SALL).

The protein belongs to the UbiA prenyltransferase family. Protoheme IX farnesyltransferase subfamily.

Its subcellular location is the cell inner membrane. It catalyses the reaction heme b + (2E,6E)-farnesyl diphosphate + H2O = Fe(II)-heme o + diphosphate. It functions in the pathway porphyrin-containing compound metabolism; heme O biosynthesis; heme O from protoheme: step 1/1. Its function is as follows. Converts heme B (protoheme IX) to heme O by substitution of the vinyl group on carbon 2 of heme B porphyrin ring with a hydroxyethyl farnesyl side group. This is Protoheme IX farnesyltransferase from Methylorubrum extorquens (strain CM4 / NCIMB 13688) (Methylobacterium extorquens).